The primary structure comprises 288 residues: 4-diphosphocytidyl-2-C-methyl-D-erythritol kinase (288 aa).

Lys-22 is an active-site residue. 104-114 is an ATP binding site; the sequence is PSQAGLGGGSS. Asp-146 is a catalytic residue.

This sequence belongs to the GHMP kinase family. IspE subfamily.

It carries out the reaction 4-CDP-2-C-methyl-D-erythritol + ATP = 4-CDP-2-C-methyl-D-erythritol 2-phosphate + ADP + H(+). Its pathway is isoprenoid biosynthesis; isopentenyl diphosphate biosynthesis via DXP pathway; isopentenyl diphosphate from 1-deoxy-D-xylulose 5-phosphate: step 3/6. Its function is as follows. Catalyzes the phosphorylation of the position 2 hydroxy group of 4-diphosphocytidyl-2C-methyl-D-erythritol. This is 4-diphosphocytidyl-2-C-methyl-D-erythritol kinase from Protochlamydia amoebophila (strain UWE25).